The following is a 664-amino-acid chain: E3 ubiquitin-protein ligase RNF139 (664 aa).

Position 2 is an N-acetylalanine (alanine 2). The next 12 membrane-spanning stretches (helical) occupy residues isoleucine 51–leucine 71, alanine 85–phenylalanine 105, serine 125–leucine 145, leucine 154–isoleucine 174, leucine 178–leucine 198, glycine 293–isoleucine 313, leucine 323–leucine 343, methionine 356–methionine 376, phenylalanine 390–leucine 410, leucine 420–valine 440, serine 469–phenylalanine 489, and isoleucine 495–alanine 512. The RING-type; atypical zinc finger occupies cysteine 547–histidine 586. A compositionally biased stretch (polar residues) spans serine 599–proline 610. Residues serine 599–aspartate 664 are disordered. Basic and acidic residues predominate over residues glutamate 616–glutamate 628. A compositionally biased stretch (acidic residues) spans leucine 629–aspartate 639. At serine 634 the chain carries Phosphoserine. 2 positions are modified to phosphothreonine: threonine 635 and threonine 663.

Interacts with VHL. Interacts with MHC class I and HM13. Component of SCAP-SREBP complex composed of SREBF2, SCAP and RNF139; the complex hampers the interaction between SCAP and SEC24B, thereby reducing SREBF2 proteolytic processing. Interacts with SREBF2 (via C-terminal domain). Interacts with SCAP; the interaction inhibits the interaction of SCAP with SEC24B and hampering the ER to Golgi transport of the SCAP-SREBP complex. Interacts with SEC24B. Interacts with INSIG1 and INSIG2. Interacts with EIF3F and EIF3H; the interaction leads to protein translation inhibitions in a ubiquitination-dependent manner. Interacts with XBP1; the interaction induces ubiquitination and degradation of XBP1. Interacts with AUP1, AMFR and UBE2G2; interaction with AUP1 facilitates interaction of RNF139 with ubiquitin-conjugating enzyme UBE2G2 and ubiquitin ligase AMFR/gp78, leading to sterol-induced ubiquitination of HMGCR and its subsequent proteasomal degradation. Post-translationally, autoubiquitinated. Ubiquitination is induced by sterol and leads to ist degradation via the ubiquitin-proteasome pathway.

It is found in the endoplasmic reticulum membrane. The enzyme catalyses S-ubiquitinyl-[E2 ubiquitin-conjugating enzyme]-L-cysteine + [acceptor protein]-L-lysine = [E2 ubiquitin-conjugating enzyme]-L-cysteine + N(6)-ubiquitinyl-[acceptor protein]-L-lysine.. It functions in the pathway protein modification; protein ubiquitination. E3-ubiquitin ligase; acts as a negative regulator of cell proliferation through mechanisms involving G2/M arrest and cell death. Required for MHC class I ubiquitination in cells expressing the cytomegalovirus protein US2 before dislocation from the endoplasmic reticulum (ER). Affects SREBP processing by hindering the SREBP-SCAP complex translocation from the ER to the Golgi, thereby reducing SREBF2 target gene expression. Involved in the sterol-accelerated degradation of HMGCR. This is achieved through binding to INSIG1 and/or INSIG2 at the ER membrane. In addition, interaction of RNF139 with AUP1 facilitates interaction of RNF139 with ubiquitin-conjugating enzyme UBE2G2 and ubiquitin ligase AMFR, leading to ubiquitination of HMGCR. The ubiquitinated HMGCR is then released from the ER by the complex into the cytosol for subsequent destruction. Required for INSIG1 ubiquitination. May be required for EIF3 complex ubiquitination. This chain is E3 ubiquitin-protein ligase RNF139 (RNF139), found in Pongo abelii (Sumatran orangutan).